A 326-amino-acid chain; its full sequence is Flap endonuclease 1 (326 aa).

The segment at 1–98 is N-domain; sequence MGVQFGDFIP…KTRKVRREMK (98 aa). Residues aspartate 27, aspartate 80, glutamate 152, glutamate 154, aspartate 173, aspartate 175, and aspartate 224 each coordinate Mg(2+). An I-domain region spans residues 116 to 245; it reads EAAKYAKRVS…KRAYELVRSG (130 aa). The interaction with PCNA stretch occupies residues 317-325; it reads KQKTLDAWF.

This sequence belongs to the XPG/RAD2 endonuclease family. FEN1 subfamily. Interacts with PCNA. PCNA stimulates the nuclease activity without altering cleavage specificity. It depends on Mg(2+) as a cofactor.

Functionally, structure-specific nuclease with 5'-flap endonuclease and 5'-3' exonuclease activities involved in DNA replication and repair. During DNA replication, cleaves the 5'-overhanging flap structure that is generated by displacement synthesis when DNA polymerase encounters the 5'-end of a downstream Okazaki fragment. Binds the unpaired 3'-DNA end and kinks the DNA to facilitate 5' cleavage specificity. Cleaves one nucleotide into the double-stranded DNA from the junction in flap DNA, leaving a nick for ligation. Also involved in the base excision repair (BER) pathway. Acts as a genome stabilization factor that prevents flaps from equilibrating into structures that lead to duplications and deletions. Also possesses 5'-3' exonuclease activity on nicked or gapped double-stranded DNA. This Methanocaldococcus jannaschii (strain ATCC 43067 / DSM 2661 / JAL-1 / JCM 10045 / NBRC 100440) (Methanococcus jannaschii) protein is Flap endonuclease 1.